The following is a 276-amino-acid chain: Shikimate dehydrogenase (NADP(+)) (276 aa).

Shikimate contacts are provided by residues 19–21 (SKS) and threonine 66. The Proton acceptor role is filled by lysine 70. Position 82 (aspartate 82) interacts with NADP(+). Residues asparagine 91 and aspartate 107 each contribute to the shikimate site. NADP(+)-binding positions include 133-137 (GAGGA), 157-162 (NRTRSR), and leucine 222. Tyrosine 224 contacts shikimate. Glycine 245 lines the NADP(+) pocket.

It belongs to the shikimate dehydrogenase family. Homodimer.

It carries out the reaction shikimate + NADP(+) = 3-dehydroshikimate + NADPH + H(+). The protein operates within metabolic intermediate biosynthesis; chorismate biosynthesis; chorismate from D-erythrose 4-phosphate and phosphoenolpyruvate: step 4/7. In terms of biological role, involved in the biosynthesis of the chorismate, which leads to the biosynthesis of aromatic amino acids. Catalyzes the reversible NADPH linked reduction of 3-dehydroshikimate (DHSA) to yield shikimate (SA). This chain is Shikimate dehydrogenase (NADP(+)), found in Ruegeria sp. (strain TM1040) (Silicibacter sp.).